A 406-amino-acid polypeptide reads, in one-letter code: Succinylornithine transaminase (406 aa).

Lys252 bears the N6-(pyridoxal phosphate)lysine mark.

Belongs to the class-III pyridoxal-phosphate-dependent aminotransferase family. AstC subfamily. Pyridoxal 5'-phosphate serves as cofactor.

It catalyses the reaction N(2)-succinyl-L-ornithine + 2-oxoglutarate = N-succinyl-L-glutamate 5-semialdehyde + L-glutamate. The protein operates within amino-acid degradation; L-arginine degradation via AST pathway; L-glutamate and succinate from L-arginine: step 3/5. Its function is as follows. Catalyzes the transamination of N(2)-succinylornithine and alpha-ketoglutarate into N(2)-succinylglutamate semialdehyde and glutamate. Can also act as an acetylornithine aminotransferase. This chain is Succinylornithine transaminase, found in Escherichia coli (strain 55989 / EAEC).